We begin with the raw amino-acid sequence, 248 residues long: 23S rRNA (guanosine-2'-O-)-methyltransferase RlmB (248 aa).

3 residues coordinate S-adenosyl-L-methionine: Gly-198, Leu-218, and Leu-227.

It belongs to the class IV-like SAM-binding methyltransferase superfamily. RNA methyltransferase TrmH family. RlmB subfamily.

It localises to the cytoplasm. The enzyme catalyses guanosine(2251) in 23S rRNA + S-adenosyl-L-methionine = 2'-O-methylguanosine(2251) in 23S rRNA + S-adenosyl-L-homocysteine + H(+). Specifically methylates the ribose of guanosine 2251 in 23S rRNA. This Pseudomonas putida (strain ATCC 47054 / DSM 6125 / CFBP 8728 / NCIMB 11950 / KT2440) protein is 23S rRNA (guanosine-2'-O-)-methyltransferase RlmB.